A 257-amino-acid polypeptide reads, in one-letter code: Nickel import system ATP-binding protein NikD (257 aa).

In terms of domain architecture, ABC transporter spans 4 to 245 (IDIQNLTIKN…HLHPYTERLI (242 aa)). 37–44 (GESGAGKS) is a binding site for ATP.

It belongs to the ABC transporter superfamily. As to quaternary structure, the complex is composed of two ATP-binding proteins (NikD and NikE), two transmembrane proteins (NikB and NikC) and a solute-binding protein (NikA).

It is found in the cell membrane. It catalyses the reaction Ni(2+)(out) + ATP + H2O = Ni(2+)(in) + ADP + phosphate + H(+). Functionally, part of the ABC transporter complex NikABCDE (Opp2) involved in nickel import. Probably responsible for energy coupling to the transport system. The chain is Nickel import system ATP-binding protein NikD from Staphylococcus aureus (strain MW2).